A 417-amino-acid chain; its full sequence is Valine--pyruvate aminotransferase (417 aa).

Lys249 carries the post-translational modification N6-(pyridoxal phosphate)lysine.

This sequence belongs to the class-I pyridoxal-phosphate-dependent aminotransferase family. As to quaternary structure, homodimer. It depends on pyridoxal 5'-phosphate as a cofactor.

The protein localises to the cytoplasm. The enzyme catalyses L-valine + pyruvate = 3-methyl-2-oxobutanoate + L-alanine. Its function is as follows. Involved in the biosynthesis of alanine. In Escherichia coli (strain K12), this protein is Valine--pyruvate aminotransferase (avtA).